The following is a 355-amino-acid chain: Ribosomal RNA large subunit methyltransferase M (355 aa).

S-adenosyl-L-methionine is bound by residues Ser-191, 224–227, Asp-243, Asp-263, and Asp-279; that span reads APGG. Lys-308 acts as the Proton acceptor in catalysis.

Belongs to the class I-like SAM-binding methyltransferase superfamily. RNA methyltransferase RlmE family. RlmM subfamily. In terms of assembly, monomer.

It localises to the cytoplasm. The enzyme catalyses cytidine(2498) in 23S rRNA + S-adenosyl-L-methionine = 2'-O-methylcytidine(2498) in 23S rRNA + S-adenosyl-L-homocysteine + H(+). Its function is as follows. Catalyzes the 2'-O-methylation at nucleotide C2498 in 23S rRNA. This is Ribosomal RNA large subunit methyltransferase M from Stenotrophomonas maltophilia (strain K279a).